Here is an 882-residue protein sequence, read N- to C-terminus: HTH-type transcriptional regulator AlkS (882 aa).

An ATP-binding site is contributed by 51–58; sequence APPGYGKT. The region spanning 815–880 is the HTH luxR-type domain; the sequence is ENKADALLTR…QATIEAERQG (66 aa). A DNA-binding region (H-T-H motif) is located at residues 839–858; that stretch reads NKQIATNMHVTEDAIKWHMR.

The protein operates within hydrocarbon metabolism; alkane degradation. In terms of biological role, this protein activates the expression of alkBFGHJKL operon in the presence of alkanes. The chain is HTH-type transcriptional regulator AlkS (alkS) from Ectopseudomonas oleovorans (Pseudomonas oleovorans).